The primary structure comprises 340 residues: HTH-type transcriptional regulator PtxS (340 aa).

An HTH lacI-type domain is found at 12–67 (VTISEVAQAAGVSKATVSRYIGGDRQLLADATAQRIEAVIEQLGYRPNRMASALKR). A DNA-binding region (H-T-H motif) is located at residues 14-33 (ISEVAQAAGVSKATVSRYIG).

Homodimer.

Its activity is regulated as follows. 2-ketogluconate acts as a molecular effector and causes dissociation of PtxS from its target promoter. Glucose negatively affects the molecular binding of PtxS and 2KGA, and gluconic acid inhibits the PtxS-2KGA binding reaction. Its function is as follows. Involved in the regulation of 2-ketogluconic acid metabolism via the control of the expression of the kgu operon. Binds directly to a 14-bp palindrome sequence via its conserved HTH motif. In Pseudomonas plecoglossicida, this protein is HTH-type transcriptional regulator PtxS.